The following is a 429-amino-acid chain: Serine hydroxymethyltransferase (429 aa).

(6S)-5,6,7,8-tetrahydrofolate contacts are provided by residues Leu-126 and 130–132; that span reads GHL. Lys-235 carries the post-translational modification N6-(pyridoxal phosphate)lysine. 359-361 is a (6S)-5,6,7,8-tetrahydrofolate binding site; sequence SPF.

This sequence belongs to the SHMT family. Homodimer. Pyridoxal 5'-phosphate serves as cofactor.

It localises to the cytoplasm. It carries out the reaction (6R)-5,10-methylene-5,6,7,8-tetrahydrofolate + glycine + H2O = (6S)-5,6,7,8-tetrahydrofolate + L-serine. It participates in one-carbon metabolism; tetrahydrofolate interconversion. It functions in the pathway amino-acid biosynthesis; glycine biosynthesis; glycine from L-serine: step 1/1. Its function is as follows. Catalyzes the reversible interconversion of serine and glycine with tetrahydrofolate (THF) serving as the one-carbon carrier. This reaction serves as the major source of one-carbon groups required for the biosynthesis of purines, thymidylate, methionine, and other important biomolecules. Also exhibits THF-independent aldolase activity toward beta-hydroxyamino acids, producing glycine and aldehydes, via a retro-aldol mechanism. The polypeptide is Serine hydroxymethyltransferase (Synechococcus sp. (strain CC9902)).